We begin with the raw amino-acid sequence, 171 residues long: Cadmium-induced protein AS8 (171 aa).

This chain is Cadmium-induced protein AS8, found in Arabidopsis thaliana (Mouse-ear cress).